The chain runs to 106 residues: UPF0145 protein Tpet_0165 (106 aa).

The protein belongs to the UPF0145 family.

This is UPF0145 protein Tpet_0165 from Thermotoga petrophila (strain ATCC BAA-488 / DSM 13995 / JCM 10881 / RKU-1).